The sequence spans 412 residues: Double C2-like domain-containing protein beta (412 aa).

The segment at 1–36 (MTLRRRGEKATISIQEHMAIDVCPGPIRPIKQISDY) is negatively regulates targeting to plasma membrane. Residues 1 to 90 (MTLRRRGEKA…EDVDQLFGAY (90 aa)) are mediates interaction with DYNLT1. Positions 38 to 123 (PRFPRGLPPT…PDVDGYESDD (86 aa)) are disordered. A compositionally biased stretch (pro residues) spans 43–58 (GLPPTAAPRAPAPPDA). The span at 59–74 (PARSPAASASPRSPSD) shows a compositional bias: low complexity. Residues 95 to 108 (GPSPGPSPARPPAK) are compositionally biased toward pro residues. Positions 112-123 (DEPDVDGYESDD) are enriched in acidic residues. C2 domains lie at 126–250 (ALGT…SICL) and 266–399 (ERGR…ERWH). Ca(2+) is bound by residues Asp157, Asp163, Asp218, Asp220, Asp297, Asp303, Asp357, Asp359, and Asp365. Positions 257–375 (DKAEDKSLEE…FIGGVVLGIN (119 aa)) are mediates interaction with STXBP3. Ser411 is modified (phosphoserine).

Interacts with cytoplasmic dynein light chain DYNLT1. May interact with UNC13A; the interaction mediates targeting to the plasma membrane. Probably interacts with the SNARE (soluble N-ethylmaleimide-sensitive factor attached protein receptor) complex composed of SNAP25, STX1A and VAMP2; the interaction is calcium-dependent and competitive with SYT1. Interacts with STX4; the interaction is calcium-dependent, increased by insulin and glucose, and mediates vesicle fusion with plasma membrane in pancreatic cells and adipocytes. Interacts with STXBP3; the interaction is direct, occurs at the cell membrane and regulates glucose-stimulated insulin secretion. Requires Ca(2+) as cofactor. Widely expressed. Expressed in pancreatic islet cells (at protein level).

The protein resides in the cytoplasm. It is found in the cytoplasmic granule. Its subcellular location is the cell membrane. Functionally, calcium sensor which positively regulates SNARE-dependent fusion of vesicles with membranes. Binds phospholipids in a calcium-dependent manner and may act at the priming stage of fusion by modifying membrane curvature to stimulate fusion. Involved in calcium-triggered exocytosis in chromaffin cells and calcium-dependent spontaneous release of neurotransmitter in absence of action potentials in neuronal cells. Involved both in glucose-stimulated insulin secretion in pancreatic cells and insulin-dependent GLUT4 transport to the plasma membrane in adipocytes. In Mus musculus (Mouse), this protein is Double C2-like domain-containing protein beta (Doc2b).